Here is a 188-residue protein sequence, read N- to C-terminus: NADH-quinone oxidoreductase subunit I (188 aa).

2 consecutive 4Fe-4S ferredoxin-type domains span residues Leu44–Ala74 and Arg90–Glu119. The [4Fe-4S] cluster site is built by Cys54, Cys57, Cys60, Cys64, Cys99, Cys102, Cys105, and Cys109. The tract at residues Gly144–Pro188 is disordered. Over residues Asp176–Pro188 the composition is skewed to acidic residues.

It belongs to the complex I 23 kDa subunit family. NDH-1 is composed of 14 different subunits. Subunits NuoA, H, J, K, L, M, N constitute the membrane sector of the complex. [4Fe-4S] cluster is required as a cofactor.

It localises to the cell membrane. The catalysed reaction is a quinone + NADH + 5 H(+)(in) = a quinol + NAD(+) + 4 H(+)(out). NDH-1 shuttles electrons from NADH, via FMN and iron-sulfur (Fe-S) centers, to quinones in the respiratory chain. The immediate electron acceptor for the enzyme in this species is believed to be ubiquinone. Couples the redox reaction to proton translocation (for every two electrons transferred, four hydrogen ions are translocated across the cytoplasmic membrane), and thus conserves the redox energy in a proton gradient. The polypeptide is NADH-quinone oxidoreductase subunit I (Rhodococcus opacus (strain B4)).